A 719-amino-acid polypeptide reads, in one-letter code: T-cell immunomodulatory protein homolog (719 aa).

Positions 1 to 32 (MYNFLSCKKKSIILQVLLIICTYNILLNFVNI) are cleaved as a signal peptide. Topologically, residues 33-677 (FVNNNEKNHK…LSVNPSKKFY (645 aa)) are extracellular. N-linked (GlcNAc...) asparagine glycosylation is found at Asn-144, Asn-277, Asn-410, Asn-540, and Asn-659. A helical transmembrane segment spans residues 678–697 (SILYITLICLSVIGVLIFIL). Residues 698–719 (DRKEKVEDSKEELGFKSHFVIG) lie on the Cytoplasmic side of the membrane.

The protein belongs to the TIP family.

Its subcellular location is the membrane. Functionally, may protect the parasite against attack by the host immune system by immunomodulation. The polypeptide is T-cell immunomodulatory protein homolog (Plasmodium falciparum (isolate 3D7)).